The sequence spans 49 residues: Large ribosomal subunit protein bL33 (49 aa).

This sequence belongs to the bacterial ribosomal protein bL33 family.

The polypeptide is Large ribosomal subunit protein bL33 (Streptococcus gordonii (strain Challis / ATCC 35105 / BCRC 15272 / CH1 / DL1 / V288)).